The sequence spans 432 residues: Tubulin-specific chaperone cofactor E-like protein (432 aa).

LRR repeat units lie at residues 69–94, 95–117, 118–140, 143–167, 168–191, 193–217, and 218–242; these read ASHV…ILKN, LPHL…HELP, VSTL…QSFL, LPKV…EPIS, TTVR…NVVK, FPNV…HFEQ, and LPFW…QLNR. Positions 254-295 are LRRCT; it reads IPLLDALTNEERLHLIIGRLHHLRVLNGSKISSEQREQSERF. The interval 324–415 is ubiquitin-like (UBL); it reads VTIDLTPKKE…GDSFLVQEKI (92 aa).

It is found in the cytoplasm. The protein resides in the cytoskeleton. Acts as a regulator of tubulin stability. Involved in microtubule-dependent neuronal function. May be involved in tubulin acetylation/deacetylation pathway. The protein is Tubulin-specific chaperone cofactor E-like protein of Caenorhabditis elegans.